The primary structure comprises 627 residues: Probable inactive receptor kinase At3g02880 (627 aa).

An N-terminal signal peptide occupies residues 1-23; the sequence is MKYKRKLSLSVVFLFVFYLAAVT. 5 LRR repeats span residues 91–112, 115–137, 139–161, 163–184, and 185–206; these read QLKTLSLRFNSLSGPIPSDFSN, LLRYLYLQGNAFSGEIPSLLFTL, SIIRINLGENKFSGRIPDNVNSA, RLVTLYLERNQLSGPIPEITLP, and LQQFNVSSNQLNGSIPSSLSSW. The interval 222–246 is disordered; that stretch reads DTCEAESPNGGDAGGPNTPPEKKDS. A helical membrane pass occupies residues 253-273; sequence AIVGIVIGCVVGLLLLLLILF. The 276-residue stretch at 345–620 folds into the Protein kinase domain; that stretch reads KASAEVLGKG…LIEEVSHSSG (276 aa). Serine 347 carries the post-translational modification Phosphoserine. Residues 351-359 and lysine 373 contribute to the ATP site; that span reads LGKGTVGSS. Residues 389–409 form a helical membrane-spanning segment; it reads LHVLGSMSHANLVTLIAYYFS. Serine 424 carries the post-translational modification Phosphoserine. Position 444 is a phosphothreonine (threonine 444). Phosphoserine is present on serine 519. Position 595 is a phosphothreonine (threonine 595). Phosphoserine occurs at positions 621 and 626.

This sequence belongs to the protein kinase superfamily. Ser/Thr protein kinase family.

The protein localises to the membrane. The polypeptide is Probable inactive receptor kinase At3g02880 (Arabidopsis thaliana (Mouse-ear cress)).